The sequence spans 492 residues: Cysteine--tRNA ligase (492 aa).

Cysteine 27 is a binding site for Zn(2+). Residues 29–39 (VTVYDLCHLGH) carry the 'HIGH' region motif. The Zn(2+) site is built by cysteine 211, histidine 236, and glutamate 240. The short motif at 268–272 (KMSKS) is the 'KMSKS' region element. Position 271 (lysine 271) interacts with ATP.

This sequence belongs to the class-I aminoacyl-tRNA synthetase family. In terms of assembly, monomer. The cofactor is Zn(2+).

The protein resides in the cytoplasm. The catalysed reaction is tRNA(Cys) + L-cysteine + ATP = L-cysteinyl-tRNA(Cys) + AMP + diphosphate. This Prochlorococcus marinus subsp. pastoris (strain CCMP1986 / NIES-2087 / MED4) protein is Cysteine--tRNA ligase.